The sequence spans 468 residues: MMSSYVMSPVDETYTLFQILKGSALFLLVLWTIFANSLVFIVLYKNPRLQTVPNLLVGNLAFSDLALGLIVLPLSSVYAIAGEWVFPDALCEVFVSADILCSTASIWNLSIVGLDRYWAITSPVAYMSKRNKRTAGIMILSVWISSALISLAPLLGWKQTAQTPNLIYEKNNTVRQCTFLDLPSYTVYSATGSFFIPTLLMFFVYFKIYQAFAKHRARQIYRQKLAVSSHVIRKHIESTILHEISHVLPTSDEFAKEEEEEEDSESSGQVENGLGNGNDAIIEEDECEDEDSDEKRDDHTSMTTVTATVTGPTEAPYMKREAKISKSVPIEKESAIQKREAKPMRSVMAISYEKVKRHKNRKERIYRKSLQRKPKAISAAKERRGVKVLGIILGCFTVCWAPFFTMYVLVQFCKDCSPNAHIEMFITWLGYSNSAMNPIIYTVFNRDYQIALKRLFTSEKKPSSTSRV.

At 1 to 23 the chain is on the extracellular side; it reads MMSSYVMSPVDETYTLFQILKGS. The chain crosses the membrane as a helical span at residues 24–43; sequence ALFLLVLWTIFANSLVFIVL. Residues 44 to 54 are Cytoplasmic-facing; sequence YKNPRLQTVPN. Residues 55–77 form a helical membrane-spanning segment; sequence LLVGNLAFSDLALGLIVLPLSSV. Over 78 to 91 the chain is Extracellular; the sequence is YAIAGEWVFPDALC. A disulfide bridge connects residues cysteine 91 and cysteine 177. The chain crosses the membrane as a helical span at residues 92–114; that stretch reads EVFVSADILCSTASIWNLSIVGL. Residues 115-134 are Cytoplasmic-facing; that stretch reads DRYWAITSPVAYMSKRNKRT. A helical membrane pass occupies residues 135 to 157; the sequence is AGIMILSVWISSALISLAPLLGW. At 158 to 186 the chain is on the extracellular side; the sequence is KQTAQTPNLIYEKNNTVRQCTFLDLPSYT. N-linked (GlcNAc...) asparagine glycosylation occurs at asparagine 171. Residues 187–209 form a helical membrane-spanning segment; sequence VYSATGSFFIPTLLMFFVYFKIY. Residues 210–387 are Cytoplasmic-facing; that stretch reads QAFAKHRARQ…SAAKERRGVK (178 aa). The disordered stretch occupies residues 252–306; the sequence is DEFAKEEEEEEDSESSGQVENGLGNGNDAIIEEDECEDEDSDEKRDDHTSMTTVT. Composition is skewed to acidic residues over residues 255 to 265 and 281 to 292; these read AKEEEEEEDSE and IIEEDECEDEDS. The helical transmembrane segment at 388–410 threads the bilayer; it reads VLGIILGCFTVCWAPFFTMYVLV. Residues 411–424 are Extracellular-facing; it reads QFCKDCSPNAHIEM. Residues 425-444 traverse the membrane as a helical segment; that stretch reads FITWLGYSNSAMNPIIYTVF. Residues 445–468 are Cytoplasmic-facing; sequence NRDYQIALKRLFTSEKKPSSTSRV.

It belongs to the G-protein coupled receptor 1 family. Expressed in the pharyngeal neurons, MCL/R and NSML/R and the AS group of amphidial sensory neurons, ASEL/R, AGSL/R, ASHL/R and ASIL/R.

The protein resides in the cell membrane. Functionally, G-protein coupled receptor for tyramine, a known neurotransmitter and neuromodulator and direct precursor of octopamine. Expression in amphidial sensory neurons suggests a role in chemosensation. The sequence is that of Tyramine receptor tyra-2 (tyra-2) from Caenorhabditis elegans.